The following is a 506-amino-acid chain: Kynurenine 3-monooxygenase (506 aa).

It belongs to the aromatic-ring hydroxylase family. KMO subfamily. The cofactor is FAD.

The protein resides in the mitochondrion outer membrane. The catalysed reaction is L-kynurenine + NADPH + O2 + H(+) = 3-hydroxy-L-kynurenine + NADP(+) + H2O. The protein operates within cofactor biosynthesis; NAD(+) biosynthesis; quinolinate from L-kynurenine: step 1/3. Catalyzes the hydroxylation of L-kynurenine (L-Kyn) to form 3-hydroxy-L-kynurenine (L-3OHKyn). Required for synthesis of quinolinic acid. This is Kynurenine 3-monooxygenase (bna4) from Emericella nidulans (strain FGSC A4 / ATCC 38163 / CBS 112.46 / NRRL 194 / M139) (Aspergillus nidulans).